A 442-amino-acid polypeptide reads, in one-letter code: Trigger factor (442 aa).

The PPIase FKBP-type domain maps to 163–248 (YDRVTINYCI…IIKIEKKQEL (86 aa)).

This sequence belongs to the FKBP-type PPIase family. Tig subfamily.

It localises to the cytoplasm. The enzyme catalyses [protein]-peptidylproline (omega=180) = [protein]-peptidylproline (omega=0). Its function is as follows. Involved in protein export. Acts as a chaperone by maintaining the newly synthesized protein in an open conformation. Functions as a peptidyl-prolyl cis-trans isomerase. The sequence is that of Trigger factor from Buchnera aphidicola subsp. Acyrthosiphon pisum (strain 5A).